The following is a 359-amino-acid chain: Squamosa promoter-binding-like protein 13A (359 aa).

Residues 75-94 (AKPEGSRSSSSKRTRGNGVG) form a disordered region. The SBP-type zinc-finger motif lies at 98–175 (MPICLVDGCD…DGHNRRRRKP (78 aa)). Cysteine 101, cysteine 106, cysteine 123, histidine 126, cysteine 142, cysteine 145, histidine 149, and cysteine 161 together coordinate Zn(2+). Residues 158–174 (KRSCRKRLDGHNRRRRK) carry the Bipartite nuclear localization signal motif.

Zn(2+) serves as cofactor.

The protein resides in the nucleus. In terms of biological role, trans-acting factor that binds specifically to the consensus nucleotide sequence 5'-TNCGTACAA-3'. This chain is Squamosa promoter-binding-like protein 13A (SPL13A), found in Arabidopsis thaliana (Mouse-ear cress).